The chain runs to 262 residues: Ribosomal RNA small subunit methyltransferase A (262 aa).

S-adenosyl-L-methionine-binding residues include I18, G43, E65, D91, and N110.

This sequence belongs to the class I-like SAM-binding methyltransferase superfamily. rRNA adenine N(6)-methyltransferase family. RsmA subfamily.

The protein resides in the cytoplasm. It carries out the reaction adenosine(1518)/adenosine(1519) in 16S rRNA + 4 S-adenosyl-L-methionine = N(6)-dimethyladenosine(1518)/N(6)-dimethyladenosine(1519) in 16S rRNA + 4 S-adenosyl-L-homocysteine + 4 H(+). In terms of biological role, specifically dimethylates two adjacent adenosines (A1518 and A1519) in the loop of a conserved hairpin near the 3'-end of 16S rRNA in the 30S particle. May play a critical role in biogenesis of 30S subunits. The protein is Ribosomal RNA small subunit methyltransferase A of Ehrlichia ruminantium (strain Gardel).